The following is a 126-amino-acid chain: Large ribosomal subunit protein bL20c (126 aa).

Belongs to the bacterial ribosomal protein bL20 family.

The protein resides in the plastid. It localises to the chloroplast. Binds directly to 23S ribosomal RNA and is necessary for the in vitro assembly process of the 50S ribosomal subunit. It is not involved in the protein synthesizing functions of that subunit. In Guizotia abyssinica (Niger), this protein is Large ribosomal subunit protein bL20c.